The chain runs to 284 residues: NAD kinase (284 aa).

Residue Asp-60 is the Proton acceptor of the active site. NAD(+) is bound by residues 60–61 (DG), 134–135 (ND), Lys-145, Arg-162, Asp-164, and Gln-235.

This sequence belongs to the NAD kinase family. Requires a divalent metal cation as cofactor.

The protein resides in the cytoplasm. The enzyme catalyses NAD(+) + ATP = ADP + NADP(+) + H(+). Its function is as follows. Involved in the regulation of the intracellular balance of NAD and NADP, and is a key enzyme in the biosynthesis of NADP. Catalyzes specifically the phosphorylation on 2'-hydroxyl of the adenosine moiety of NAD to yield NADP. This is NAD kinase from Treponema denticola (strain ATCC 35405 / DSM 14222 / CIP 103919 / JCM 8153 / KCTC 15104).